We begin with the raw amino-acid sequence, 310 residues long: Translocator protein BipD (310 aa).

Coiled-coil stretches lie at residues 127–171 (DPIL…LQDY) and 250–299 (DTAR…AIST).

The protein belongs to the invasin protein D family.

It is found in the secreted. Its function is as follows. Required for invasion of epithelial cells, as well as for survival within host cells, escape from endocytic vesicles and subsequent actin-tail formation. Probably regulates the secretion of effectors BipB and BipC and their final integration into the target cell membrane. The chain is Translocator protein BipD (bipD) from Burkholderia pseudomallei (strain 1106a).